The chain runs to 439 residues: 23S rRNA (uracil(1939)-C(5))-methyltransferase RlmD (439 aa).

The 59-residue stretch at 10–68 (QKKLRAAFTTIVQDLDYQGLGVAKIQGKTWFIENALPQEQVQVQVIEEKRQYGLGRVQK) folds into the TRAM domain. [4Fe-4S] cluster is bound by residues Cys-81, Cys-87, Cys-90, and Cys-168. Gln-271, Phe-300, Asn-305, Glu-321, Asp-348, and Asp-369 together coordinate S-adenosyl-L-methionine. Cys-395 acts as the Nucleophile in catalysis.

The protein belongs to the class I-like SAM-binding methyltransferase superfamily. RNA M5U methyltransferase family. RlmD subfamily.

It catalyses the reaction uridine(1939) in 23S rRNA + S-adenosyl-L-methionine = 5-methyluridine(1939) in 23S rRNA + S-adenosyl-L-homocysteine + H(+). Catalyzes the formation of 5-methyl-uridine at position 1939 (m5U1939) in 23S rRNA. This is 23S rRNA (uracil(1939)-C(5))-methyltransferase RlmD from Histophilus somni (strain 129Pt) (Haemophilus somnus).